Consider the following 269-residue polypeptide: Putative phosphoenolpyruvate synthase regulatory protein (269 aa).

149 to 156 (GVSRSGKT) lines the ADP pocket.

The protein belongs to the pyruvate, phosphate/water dikinase regulatory protein family. PSRP subfamily.

The enzyme catalyses [pyruvate, water dikinase] + ADP = [pyruvate, water dikinase]-phosphate + AMP + H(+). It catalyses the reaction [pyruvate, water dikinase]-phosphate + phosphate + H(+) = [pyruvate, water dikinase] + diphosphate. Functionally, bifunctional serine/threonine kinase and phosphorylase involved in the regulation of the phosphoenolpyruvate synthase (PEPS) by catalyzing its phosphorylation/dephosphorylation. The sequence is that of Putative phosphoenolpyruvate synthase regulatory protein from Pseudoalteromonas translucida (strain TAC 125).